The primary structure comprises 348 residues: 3',5'-cyclic-nucleotide phosphodiesterase (348 aa).

Mn(2+) serves as cofactor.

It catalyses the reaction a nucleoside 3',5'-cyclic phosphate + H2O = a nucleoside 5'-phosphate + H(+). In terms of biological role, hydrolyzes cAMP to 5'-AMP and cGMP to 5'-GMP. Does not show phosphohydrolase activity toward various phosphatidylcholine and phosphorylated sugars. The chain is 3',5'-cyclic-nucleotide phosphodiesterase from Helicobacter pylori (strain ATCC 700392 / 26695) (Campylobacter pylori).